The sequence spans 580 residues: DNA mismatch repair protein MutL (580 aa).

The protein belongs to the DNA mismatch repair MutL/HexB family.

Functionally, this protein is involved in the repair of mismatches in DNA. It is required for dam-dependent methyl-directed DNA mismatch repair. May act as a 'molecular matchmaker', a protein that promotes the formation of a stable complex between two or more DNA-binding proteins in an ATP-dependent manner without itself being part of a final effector complex. This is DNA mismatch repair protein MutL from Chlamydia felis (strain Fe/C-56) (Chlamydophila felis).